A 61-amino-acid polypeptide reads, in one-letter code: Large ribosomal subunit protein bL28 (61 aa).

It belongs to the bacterial ribosomal protein bL28 family.

This Lactobacillus johnsonii (strain CNCM I-12250 / La1 / NCC 533) protein is Large ribosomal subunit protein bL28.